We begin with the raw amino-acid sequence, 478 residues long: Catalase (478 aa).

The disordered stretch occupies residues 1 to 23 (MTNQLTTNEGQPWADNQHSQTAG). Residues His-53 and Asn-126 contribute to the active site. Tyr-336 contacts heme.

It belongs to the catalase family. Heme serves as cofactor.

The protein localises to the cytoplasm. The enzyme catalyses 2 H2O2 = O2 + 2 H2O. Its function is as follows. Decomposes hydrogen peroxide into water and oxygen; serves to protect cells from the toxic effects of hydrogen peroxide. In Latilactobacillus sakei (Lactobacillus sakei), this protein is Catalase (katA).